The sequence spans 284 residues: Bifunctional protein FolD (284 aa).

Residues 166–168 and isoleucine 232 contribute to the NADP(+) site; that span reads GAS.

It belongs to the tetrahydrofolate dehydrogenase/cyclohydrolase family. Homodimer.

The catalysed reaction is (6R)-5,10-methylene-5,6,7,8-tetrahydrofolate + NADP(+) = (6R)-5,10-methenyltetrahydrofolate + NADPH. The enzyme catalyses (6R)-5,10-methenyltetrahydrofolate + H2O = (6R)-10-formyltetrahydrofolate + H(+). It participates in one-carbon metabolism; tetrahydrofolate interconversion. In terms of biological role, catalyzes the oxidation of 5,10-methylenetetrahydrofolate to 5,10-methenyltetrahydrofolate and then the hydrolysis of 5,10-methenyltetrahydrofolate to 10-formyltetrahydrofolate. This chain is Bifunctional protein FolD, found in Shewanella oneidensis (strain ATCC 700550 / JCM 31522 / CIP 106686 / LMG 19005 / NCIMB 14063 / MR-1).